Here is a 1417-residue protein sequence, read N- to C-terminus: DExH-box ATP-dependent RNA helicase DExH4, chloroplastic (1417 aa).

Basic residues predominate over residues Met-1–Gln-12. The segment at Met-1–Leu-37 is disordered. A chloroplast-targeting transit peptide spans Met-1–Thr-61. Residues Leu-607 to Gln-781 enclose the Helicase ATP-binding domain. Gly-620–Thr-627 is an ATP binding site. Positions Asp-722–His-725 match the DEIH box motif. One can recognise a Helicase C-terminal domain in the interval Leu-868–Gly-1043.

This sequence belongs to the DExH box helicase family.

It localises to the plastid. It is found in the chloroplast. It carries out the reaction ATP + H2O = ADP + phosphate + H(+). The sequence is that of DExH-box ATP-dependent RNA helicase DExH4, chloroplastic from Arabidopsis thaliana (Mouse-ear cress).